A 220-amino-acid polypeptide reads, in one-letter code: MNGEIITVAVPKGRLLEESSALFERALGVSPKRLLDGTRKLAADAPEAGLRFISIRAADVASYVEHGAAAVGIVGLDILREEPRDLYEPLDLGIGRCQVIVARHKQAKPLPRGVAPRVATKYLSLAAHHFARKGIPAEIIPLHGSIEVAPSLGLADAIVDITETGETLRANGLVIEELVLDVSARLVVNRVALKLHAERLRRLIEALRRVCAETATPKVR.

Belongs to the ATP phosphoribosyltransferase family. Short subfamily. Heteromultimer composed of HisG and HisZ subunits.

The protein localises to the cytoplasm. The catalysed reaction is 1-(5-phospho-beta-D-ribosyl)-ATP + diphosphate = 5-phospho-alpha-D-ribose 1-diphosphate + ATP. The protein operates within amino-acid biosynthesis; L-histidine biosynthesis; L-histidine from 5-phospho-alpha-D-ribose 1-diphosphate: step 1/9. Functionally, catalyzes the condensation of ATP and 5-phosphoribose 1-diphosphate to form N'-(5'-phosphoribosyl)-ATP (PR-ATP). Has a crucial role in the pathway because the rate of histidine biosynthesis seems to be controlled primarily by regulation of HisG enzymatic activity. This Anaeromyxobacter sp. (strain Fw109-5) protein is ATP phosphoribosyltransferase.